Reading from the N-terminus, the 603-residue chain is DNA mismatch repair protein MutL (603 aa).

It belongs to the DNA mismatch repair MutL/HexB family.

This protein is involved in the repair of mismatches in DNA. It is required for dam-dependent methyl-directed DNA mismatch repair. May act as a 'molecular matchmaker', a protein that promotes the formation of a stable complex between two or more DNA-binding proteins in an ATP-dependent manner without itself being part of a final effector complex. The sequence is that of DNA mismatch repair protein MutL from Nitrobacter winogradskyi (strain ATCC 25391 / DSM 10237 / CIP 104748 / NCIMB 11846 / Nb-255).